Consider the following 189-residue polypeptide: Probable nicotinate-nucleotide adenylyltransferase (189 aa).

It belongs to the NadD family.

It carries out the reaction nicotinate beta-D-ribonucleotide + ATP + H(+) = deamido-NAD(+) + diphosphate. It participates in cofactor biosynthesis; NAD(+) biosynthesis; deamido-NAD(+) from nicotinate D-ribonucleotide: step 1/1. In terms of biological role, catalyzes the reversible adenylation of nicotinate mononucleotide (NaMN) to nicotinic acid adenine dinucleotide (NaAD). The protein is Probable nicotinate-nucleotide adenylyltransferase of Bacillus cereus (strain ATCC 10987 / NRS 248).